A 420-amino-acid chain; its full sequence is Heterogeneous nuclear ribonucleoprotein D-like (420 aa).

Disordered stretches follow at residues M1–P83 and Q96–M120. Omega-N-methylarginine is present on R25. Positions R36–Q52 are enriched in low complexity. 2 RRM domains span residues G148–E230 and K233–E312. N6-methyllysine is present on K161. K209 is covalently cross-linked (Glycyl lysine isopeptide (Lys-Gly) (interchain with G-Cter in SUMO2)). Position 216 is an N6-acetyllysine (K216). S241 is modified (phosphoserine). Disordered regions lie at residues V313–Q348 and G398–Y420. Positions G323–Q342 are enriched in gly residues. Positions Q342 to Y420 are necessary for interaction with TNPO1. A necessary for its nuclear import and export region spans residues Y396–Y420. R408 bears the Dimethylated arginine; alternate mark. R408 is modified (omega-N-methylarginine; alternate).

As to quaternary structure, interacts with ZNF148. Interacts with TNPO1. Dimethylation of Arg-408 is probably of the asymmetric type. Expressed in heart, brain, placenta, lung, liver, skeletal muscle, kidney, pancreas, spleen, thymus, prostate, testis, ovary, small intestine, colon and leukocytes. Expressed in myeloid leukemia, gastric adenocarcinoma, cervical carcinoma, hepatoma, fibrosarcoma, colon adenocarcinoma, epidermoid carcinoma, osteosarcoma and urinary bladder carcinoma cells.

It localises to the nucleus. The protein resides in the cytoplasm. Functionally, acts as a transcriptional regulator. Promotes transcription repression. Promotes transcription activation in differentiated myotubes. Binds to double- and single-stranded DNA sequences. Binds to the transcription suppressor CATR sequence of the COX5B promoter. Binds with high affinity to RNA molecules that contain AU-rich elements (AREs) found within the 3'-UTR of many proto-oncogenes and cytokine mRNAs. Binds both to nuclear and cytoplasmic poly(A) mRNAs. Binds to poly(G) and poly(A), but not to poly(U) or poly(C) RNA homopolymers. Binds to the 5'-ACUAGC-3' RNA consensus sequence. This is Heterogeneous nuclear ribonucleoprotein D-like (HNRNPDL) from Homo sapiens (Human).